We begin with the raw amino-acid sequence, 102 residues long: Iron-sulfur cluster assembly protein CyaY (102 aa).

Belongs to the frataxin family.

Its function is as follows. Involved in iron-sulfur (Fe-S) cluster assembly. May act as a regulator of Fe-S biogenesis. This chain is Iron-sulfur cluster assembly protein CyaY, found in Histophilus somni (strain 2336) (Haemophilus somnus).